A 477-amino-acid chain; its full sequence is Cytochrome b mRNA maturase bI3 (477 aa).

Positions 1 to 163 (MRLLKSHPLL…IPWIGQDIVE (163 aa)) are cytochrome b. A run of 5 helical transmembrane segments spans residues 32–52 (FGSL…TLAM), 86–106 (ASAF…YGSY), 113–133 (VWAI…LGYV), 142–162 (WGAT…QDIV), and 166–186 (IITL…VVVY). Residues 164 to 477 (SKIITLIINL…YSTLNYPDAK (314 aa)) are maturase.

It in the N-terminal section; belongs to the cytochrome b family. In the C-terminal section; belongs to the LAGLIDADG endonuclease family.

The protein localises to the mitochondrion inner membrane. Mitochondrial mRNA maturase required for splicing of intron 3 of the cytochrome b (cob) gene, containing its own coding sequence. The chain is Cytochrome b mRNA maturase bI3 (bI3) from Neurospora crassa (strain ATCC 24698 / 74-OR23-1A / CBS 708.71 / DSM 1257 / FGSC 987).